The following is a 575-amino-acid chain: RecBCD enzyme subunit RecD (575 aa).

170-177 (GGPGTGKT) provides a ligand contact to ATP.

It belongs to the RecD family. As to quaternary structure, heterotrimer of RecB, RecC and RecD. All subunits contribute to DNA-binding.

The enzyme catalyses Couples ATP hydrolysis with the unwinding of duplex DNA at the replication fork by translocating in the 5'-3' direction. This creates two antiparallel DNA single strands (ssDNA). The leading ssDNA polymer is the template for DNA polymerase III holoenzyme which synthesizes a continuous strand.. It carries out the reaction ATP + H2O = ADP + phosphate + H(+). Functionally, a helicase/nuclease that prepares dsDNA breaks (DSB) for recombinational DNA repair. Binds to DSBs and unwinds DNA via a highly rapid and processive ATP-dependent bidirectional helicase activity. Holoenzyme degrades any linearized DNA that is unable to undergo homologous recombination. In the holoenzyme this subunit has ssDNA-dependent ATPase and 5'-3' helicase activity. When added to pre-assembled RecBC greatly stimulates nuclease activity and augments holoenzyme processivity. Unlike the case in E.coli, suppresses RecA-dependent homologous recombination, is instead required for single-strand annealing pathway repair of DSB. A helicase/nuclease that prepares dsDNA breaks (DSB) for recombinational DNA repair. Binds to DSBs and unwinds DNA via a highly rapid and processive ATP-dependent bidirectional helicase activity. Unwinds dsDNA until it encounters a Chi (crossover hotspot instigator) sequence from the 3' direction. Cuts ssDNA a few nucleotides 3' to the Chi site. The properties and activities of the enzyme are changed at Chi. The Chi-altered holoenzyme produces a long 3'-ssDNA overhang and facilitates RecA-binding to the ssDNA for homologous DNA recombination and repair. Holoenzyme degrades any linearized DNA that is unable to undergo homologous recombination. In the holoenzyme this subunit has ssDNA-dependent ATPase and 5'-3' helicase activity. When added to pre-assembled RecBC greatly stimulates nuclease activity and augments holoenzyme processivity. Negatively regulates the RecA-loading ability of RecBCD. In Mycobacterium tuberculosis (strain CDC 1551 / Oshkosh), this protein is RecBCD enzyme subunit RecD.